Consider the following 148-residue polypeptide: ATP synthase epsilon chain (148 aa).

It belongs to the ATPase epsilon chain family. F-type ATPases have 2 components, CF(1) - the catalytic core - and CF(0) - the membrane proton channel. CF(1) has five subunits: alpha(3), beta(3), gamma(1), delta(1), epsilon(1). CF(0) has three main subunits: a, b and c.

It is found in the cell membrane. Functionally, produces ATP from ADP in the presence of a proton gradient across the membrane. In Streptococcus thermophilus (strain ATCC BAA-491 / LMD-9), this protein is ATP synthase epsilon chain.